Reading from the N-terminus, the 121-residue chain is Large ribosomal subunit protein bL12 (121 aa).

The protein belongs to the bacterial ribosomal protein bL12 family. Homodimer. Part of the ribosomal stalk of the 50S ribosomal subunit. Forms a multimeric L10(L12)X complex, where L10 forms an elongated spine to which 2 to 4 L12 dimers bind in a sequential fashion. Binds GTP-bound translation factors.

Forms part of the ribosomal stalk which helps the ribosome interact with GTP-bound translation factors. Is thus essential for accurate translation. The polypeptide is Large ribosomal subunit protein bL12 (Vibrio atlanticus (strain LGP32) (Vibrio splendidus (strain Mel32))).